An 830-amino-acid chain; its full sequence is G-type lectin S-receptor-like serine/threonine-protein kinase SD1-13 (830 aa).

An N-terminal signal peptide occupies residues 1–21 (MGCLLILLLTLICFSLRLCLA). In terms of domain architecture, Bulb-type lectin spans 22-145 (TDVITFSSEF…TNTGDEILWE (124 aa)). At 22-434 (TDVITFSSEF…SEFKKRTNRS (413 aa)) the chain is on the extracellular side. N-linked (GlcNAc...) asparagine glycans are attached at residues Asn-40, Asn-53, and Asn-82. Residues 283–321 (PSTKCDTYATCGQFASCRFNPGSTPPCMCIRGFKPQSYA) form the EGF-like; atypical domain. Intrachain disulfides connect Cys-287/Cys-299 and Cys-293/Cys-309. Asn-327, Asn-384, and Asn-432 each carry an N-linked (GlcNAc...) asparagine glycan. Residues 340–423 (CESRDNNDGS…TGVVFYIRLA (84 aa)) enclose the PAN domain. Disulfide bonds link Cys-377–Cys-398 and Cys-381–Cys-387. The chain crosses the membrane as a helical span at residues 435–455 (IVITVTLLVGAFLFAGTVVLA). Topologically, residues 456–830 (LWKIAKHREK…NVSLTKITGR (375 aa)) are cytoplasmic. A Protein kinase domain is found at 512–798 (FSITNKLGQG…NLPEPKQPAF (287 aa)). ATP is bound by residues 518 to 526 (LGQGGFGAV) and Lys-540. Position 545 is a phosphothreonine (Thr-545). Ser-546 and Ser-561 each carry phosphoserine. Residues 601–618 (VKQRLLDWKTRFNIIDGI) are caM-binding. The active-site Proton acceptor is Asp-637. 3 positions are modified to phosphoserine: Ser-641, Ser-654, and Ser-670. Phosphothreonine is present on Thr-671. Ser-714, Ser-715, Ser-726, Ser-805, Ser-809, Ser-810, Ser-813, Ser-818, and Ser-823 each carry phosphoserine. The tract at residues 789-830 (NLPEPKQPAFIPRRGTSEVESSGQSDPRASINNVSLTKITGR) is disordered. A compositionally biased stretch (polar residues) spans 806–830 (EVESSGQSDPRASINNVSLTKITGR). 2 positions are modified to phosphothreonine: Thr-825 and Thr-828.

Belongs to the protein kinase superfamily. Ser/Thr protein kinase family. Interacts with PUB9, PUB13 and PUB14. Binds to calmodulin (CaM) in a Ca(2+)-dependent manner. In terms of processing, autophosphorylated. Mostly expressed in rosette leaves, and, to a lower extent, in cauline leaves and stems.

It localises to the cell membrane. The catalysed reaction is L-seryl-[protein] + ATP = O-phospho-L-seryl-[protein] + ADP + H(+). It carries out the reaction L-threonyl-[protein] + ATP = O-phospho-L-threonyl-[protein] + ADP + H(+). Its function is as follows. Receptor-like serine/threonine-protein kinase that represses the disease resistance signaling pathway triggered in response to bacterial pathogen such as Pseudomonas syringae pv. tomato. This Arabidopsis thaliana (Mouse-ear cress) protein is G-type lectin S-receptor-like serine/threonine-protein kinase SD1-13 (SD113).